The chain runs to 418 residues: Putative F-box protein At3g23950 (418 aa).

Residues 1 to 42 enclose the F-box domain; the sequence is MNIPPELTFEVLVRLPLKSLARFRSMCKEWKLVIDSEFFRDC.

The protein is Putative F-box protein At3g23950 of Arabidopsis thaliana (Mouse-ear cress).